Here is a 721-residue protein sequence, read N- to C-terminus: Leucine-rich repeat flightless-interacting protein 2 (721 aa).

The tract at residues 1-370 (MGTPASGRKR…YMQGLKELKE (370 aa)) is DVL3-binding. Ser18 is subject to Phosphoserine. Residues 22-49 (EALSNIAREAEARLAAKRAARAEARDIR) adopt a coiled-coil conformation. Phosphoserine occurs at positions 96, 101, 168, 173, 190, and 202. Disordered stretches follow at residues 232-262 (SARS…ESVV) and 295-338 (KSDK…IDPD). 2 stretches are compositionally biased toward polar residues: residues 237–251 (PGFT…VSSD) and 305–338 (TRPS…IDPD). 5 positions are modified to phosphoserine: Ser309, Ser312, Ser320, Ser324, and Ser328. Residue Thr331 is modified to Phosphothreonine. Residues Ser332 and Ser333 each carry the phosphoserine modification. Coiled-coil stretches lie at residues 349–524 (DLKD…GEKH) and 566–714 (LDVR…KANR).

Belongs to the LRRFIP family. Interacts (via N-terminus) with DVL3. Interacts with FLII. Weakly interacts with MYD88 in resting cells. Following LPS-stimulation, the interaction with MYD88 is rapidly enhanced; the complex gradually dissociates to basal levels after 6 hours of stimulation. Interaction with MYD88 is regulated by LPS-induced phosphorylation at Ser-202. In the presence of LPS, competes with FLII for MYD88-binding. Ser-190 and Ser-202 are phosphorylated in response to LPS stimulation. Ser-202 phosphorylation regulates the LPS-induced interaction with MYD88. Widely expressed, with highest levels in heart and skeletal muscle.

Its function is as follows. May function as activator of the canonical Wnt signaling pathway, in association with DVL3, upstream of CTNNB1/beta-catenin. Positively regulates Toll-like receptor (TLR) signaling in response to agonist probably by competing with the negative FLII regulator for MYD88-binding. This Homo sapiens (Human) protein is Leucine-rich repeat flightless-interacting protein 2 (LRRFIP2).